Consider the following 217-residue polypeptide: MTHSIWHEKIKSFLPEHYYGRINHFLDEAYASGLVYPQRENVFKALQVTPLEETKVLILGQDPYHGPKQAQGLSFSVPEEISAPPSLINILKELADDIGPRDHHDLSTWASQGVLLLNACLTVPAGQANGHAGLIWEPFTDAVIKVLNEKDSPVVFILWGAYARKKKAFITNSKHHIIESPHPSPLSSYRGFFGSKPFSRTNAILEKEGMTGVDWLK.

Catalysis depends on Asp62, which acts as the Proton acceptor.

Belongs to the uracil-DNA glycosylase (UDG) superfamily. UNG family.

The protein localises to the cytoplasm. It carries out the reaction Hydrolyzes single-stranded DNA or mismatched double-stranded DNA and polynucleotides, releasing free uracil.. Its function is as follows. Excises uracil residues from the DNA which can arise as a result of misincorporation of dUMP residues by DNA polymerase or due to deamination of cytosine. The sequence is that of Uracil-DNA glycosylase from Streptococcus pyogenes serotype M4 (strain MGAS10750).